A 300-amino-acid polypeptide reads, in one-letter code: Transcriptional dual regulator GltC (300 aa).

One can recognise an HTH lysR-type domain in the interval 1–58; the sequence is MELRQLRYFMEVAEREHVSEAADHLHVAQSAISRQIANLEEELNVTLFEREGRNIKLT. A DNA-binding region (H-T-H motif) is located at residues 18–37; that stretch reads VSEAADHLHVAQSAISRQIA.

Belongs to the LysR transcriptional regulatory family. As to quaternary structure, interacts with gutamate dehydrogenase RocG.

Activated by alpha-ketoglutarate and inhibited by glutamate and by RocG. Positive regulator of glutamate biosynthesis (gltAB genes). Negatively regulates its own expression. In Bacillus subtilis (strain 168), this protein is Transcriptional dual regulator GltC (gltC).